Consider the following 167-residue polypeptide: Fimbrial adapter PapF (167 aa).

The signal sequence occupies residues 1 to 18 (MIRLSLFISLLLTSVAVL).

It is found in the secreted. The protein localises to the fimbrium. Its function is as follows. Adapter that links the PapG adhesin to the distal end of the tip fibrillum. PapF is required for the correct presentation of the adhesin at the distal end of the tip fibrillum. Pili are polar filaments radiating from the surface of the bacterium to a length of 0.5-1.5 micrometers and numbering 100-300 per cell, and enable bacteria to colonize the epithelium of specific host organs. This chain is Fimbrial adapter PapF (papF), found in Escherichia coli.